Reading from the N-terminus, the 262-residue chain is Acyl-[acyl-carrier-protein]--UDP-N-acetylglucosamine O-acyltransferase (262 aa).

This sequence belongs to the transferase hexapeptide repeat family. LpxA subfamily. In terms of assembly, homotrimer.

Its subcellular location is the cytoplasm. It catalyses the reaction a (3R)-hydroxyacyl-[ACP] + UDP-N-acetyl-alpha-D-glucosamine = a UDP-3-O-[(3R)-3-hydroxyacyl]-N-acetyl-alpha-D-glucosamine + holo-[ACP]. It participates in glycolipid biosynthesis; lipid IV(A) biosynthesis; lipid IV(A) from (3R)-3-hydroxytetradecanoyl-[acyl-carrier-protein] and UDP-N-acetyl-alpha-D-glucosamine: step 1/6. Involved in the biosynthesis of lipid A, a phosphorylated glycolipid that anchors the lipopolysaccharide to the outer membrane of the cell. This chain is Acyl-[acyl-carrier-protein]--UDP-N-acetylglucosamine O-acyltransferase, found in Vibrio parahaemolyticus serotype O3:K6 (strain RIMD 2210633).